We begin with the raw amino-acid sequence, 420 residues long: MSFTTISVIGLGYIGLPTAAAFASRQKQVIGVDINQHAVDIINRGEIHIVEPALGNVVKMAVEGGFLRATTTPVEADAYLIAVPTPFKGDHDPDMAYVEAAAKSIAPVLKKGALVILESTSPVGATEQMAGWLAGMRTDLTFPQQAGEQADVNIAYCPERVLPGQVMVELIKNDRVIGGMTPVCSARASALYKIFLEGECVVTNSRTAEMCKLTENSFRDVNIAFANELSLICAEQGINVWELIRLANRHPRVNILQPGPGVGGHCIAVDPWFIVAQNPQQARLIRTAREVNDGKPHWVVDQVKAAVTDCLAATDKRASEVKIACFGLAFKPNIDDLRESPAMGIAQSIARWHSGETLVVEPNIRQLPKKLDGLCTLAKLDAALAAADVLVMLVDHDEFKAIPGDAVHQRYVVDTKGVWR.

The NAD(+) site is built by Tyr-13, Ile-14, Asp-33, Thr-85, and Thr-126. Residues Arg-160, Val-161, Lys-212, Asn-216, Arg-219, His-250, Arg-252, and Gly-263 each coordinate UDP-N-acetyl-alpha-D-mannosaminouronate. The Proton donor/acceptor role is filled by Lys-212. Cys-266 serves as the catalytic Nucleophile. Residues Phe-330 and Lys-331 each contribute to the UDP-N-acetyl-alpha-D-mannosaminouronate site. An NAD(+)-binding site is contributed by Arg-338. Lys-416 lines the UDP-N-acetyl-alpha-D-mannosaminouronate pocket.

The protein belongs to the UDP-glucose/GDP-mannose dehydrogenase family. WecC subfamily. Homodimer.

It carries out the reaction UDP-N-acetyl-alpha-D-mannosamine + 2 NAD(+) + H2O = UDP-N-acetyl-alpha-D-mannosaminouronate + 2 NADH + 3 H(+). It participates in bacterial outer membrane biogenesis; enterobacterial common antigen biosynthesis. Catalyzes the four-electron oxidation of UDP-N-acetyl-D-mannosamine (UDP-ManNAc), reducing NAD(+) and releasing UDP-N-acetylmannosaminuronic acid (UDP-ManNAcA). The protein is UDP-N-acetyl-D-mannosamine dehydrogenase of Salmonella typhimurium (strain LT2 / SGSC1412 / ATCC 700720).